The following is a 236-amino-acid chain: Elastase-1 (236 aa).

Residues 1 to 236 (VVGGRVAQPN…AYISWMNGIM (236 aa)) enclose the Peptidase S1 domain. A disulfide bridge connects residues cysteine 30 and cysteine 46. The active-site Charge relay system is histidine 45. Glutamate 59, asparagine 61, threonine 64, glutamate 66, and glutamate 69 together coordinate Ca(2+). The Charge relay system role is filled by aspartate 93. Cystine bridges form between cysteine 127/cysteine 193, cysteine 158/cysteine 174, and cysteine 183/cysteine 213. Serine 187 acts as the Charge relay system in catalysis.

This sequence belongs to the peptidase S1 family. Elastase subfamily. It depends on Ca(2+) as a cofactor. In terms of tissue distribution, pancreas.

It localises to the secreted. It catalyses the reaction Hydrolysis of proteins, including elastin. Preferential cleavage: Ala-|-Xaa.. Functionally, acts upon elastin. The polypeptide is Elastase-1 (Salmo salar (Atlantic salmon)).